The primary structure comprises 110 residues: Methionine-R-sulfoxide reductase B1-A (110 aa).

One can recognise a MsrB domain in the interval 1–104 (MSFCSFSGGE…FSSSLKFIPK (104 aa)). Zn(2+) is bound by residues C23, C26, C69, and C72. Catalysis depends on U93, which acts as the Nucleophile. Position 93 (U93) is a non-standard amino acid, selenocysteine.

It belongs to the MsrB Met sulfoxide reductase family. Zn(2+) is required as a cofactor. In terms of tissue distribution, in the embryo, expressed in the polster, paraxial mesoderm, tectum, otic vesicle and liver.

It localises to the cytoplasm. Its subcellular location is the nucleus. The protein resides in the cytoskeleton. It carries out the reaction L-methionyl-[protein] + [thioredoxin]-disulfide + H2O = L-methionyl-(R)-S-oxide-[protein] + [thioredoxin]-dithiol. The catalysed reaction is [thioredoxin]-disulfide + L-methionine + H2O = L-methionine (R)-S-oxide + [thioredoxin]-dithiol. Its function is as follows. Methionine-sulfoxide reductase that specifically reduces methionine (R)-sulfoxide back to methionine. While in many cases, methionine oxidation is the result of random oxidation following oxidative stress, methionine oxidation is also a post-translational modification that takes place on specific residue. Acts as a regulator of actin assembly by reducing methionine (R)-sulfoxide mediated by MICALs (mical1, mical2 or mical3) on actin, thereby promoting filament repolymerization. Plays a role in innate immunity by reducing oxidized actin, leading to actin repolymerization in macrophages. The chain is Methionine-R-sulfoxide reductase B1-A (msrb1) from Danio rerio (Zebrafish).